Consider the following 73-residue polypeptide: UPF0235 protein LBL_1291 (73 aa).

The protein belongs to the UPF0235 family.

The sequence is that of UPF0235 protein LBL_1291 from Leptospira borgpetersenii serovar Hardjo-bovis (strain L550).